The following is a 353-amino-acid chain: ATP-dependent kinase YFH7 (353 aa).

31-39 (GSPGSGKST) provides a ligand contact to ATP.

The protein belongs to the YFH7 family.

In terms of biological role, ATP-dependent kinase that could be involved in endoplasmic reticulum membrane assembly. In Saccharomyces cerevisiae (strain RM11-1a) (Baker's yeast), this protein is ATP-dependent kinase YFH7 (YFH7).